The primary structure comprises 348 residues: Ferrochelatase (348 aa).

Fe cation-binding residues include histidine 218 and glutamate 299.

It belongs to the ferrochelatase family.

It is found in the cytoplasm. It carries out the reaction heme b + 2 H(+) = protoporphyrin IX + Fe(2+). Its pathway is porphyrin-containing compound metabolism; protoheme biosynthesis; protoheme from protoporphyrin-IX: step 1/1. In terms of biological role, catalyzes the ferrous insertion into protoporphyrin IX. The polypeptide is Ferrochelatase (Methylocella silvestris (strain DSM 15510 / CIP 108128 / LMG 27833 / NCIMB 13906 / BL2)).